Reading from the N-terminus, the 81-residue chain is Sulfur carrier protein TusA (81 aa).

Cysteine 19 serves as the catalytic Cysteine persulfide intermediate.

Belongs to the sulfur carrier protein TusA family.

The protein resides in the cytoplasm. Functionally, sulfur carrier protein which probably makes part of a sulfur-relay system. This chain is Sulfur carrier protein TusA, found in Shewanella baltica (strain OS185).